Here is a 79-residue protein sequence, read N- to C-terminus: Large ribosomal subunit protein uL24 (79 aa).

Belongs to the universal ribosomal protein uL24 family. In terms of assembly, part of the 50S ribosomal subunit.

In terms of biological role, one of two assembly initiator proteins, it binds directly to the 5'-end of the 23S rRNA, where it nucleates assembly of the 50S subunit. One of the proteins that surrounds the polypeptide exit tunnel on the outside of the subunit. The protein is Large ribosomal subunit protein uL24 of Lactobacillus johnsonii (strain CNCM I-12250 / La1 / NCC 533).